Here is a 355-residue protein sequence, read N- to C-terminus: Capsular polysaccharide biosynthesis glycosyltransferase CapH (355 aa).

Belongs to the glycosyltransferase group 1 family. Glycosyltransferase 4 subfamily.

Its pathway is capsule biogenesis; capsule polysaccharide biosynthesis. Required for the biosynthesis of type 1 capsular polysaccharide. The protein is Capsular polysaccharide biosynthesis glycosyltransferase CapH (capH) of Staphylococcus aureus.